A 108-amino-acid polypeptide reads, in one-letter code: MLTGYRLMWMVVMFDLPVITKAERKAATGFRNALLDVGFQMSQFSVYLRFCTSQAQVDTLCRQVEQALPAGGKVHIFQFTDKQYERAISFHGRSRQPAQKAPDQFDLF.

Asp15 contacts Mg(2+).

The protein belongs to the CRISPR-associated endoribonuclease Cas2 protein family. In terms of assembly, homodimer, forms a heterotetramer with a Cas1 homodimer. It depends on Mg(2+) as a cofactor.

CRISPR (clustered regularly interspaced short palindromic repeat), is an adaptive immune system that provides protection against mobile genetic elements (viruses, transposable elements and conjugative plasmids). CRISPR clusters contain sequences complementary to antecedent mobile elements and target invading nucleic acids. CRISPR clusters are transcribed and processed into CRISPR RNA (crRNA). Functions as a ssRNA-specific endoribonuclease. Involved in the integration of spacer DNA into the CRISPR cassette. This Paracidovorax avenae (strain ATCC 19860 / DSM 7227 / CCUG 15838 / JCM 20985 / LMG 2117 / NCPPB 1011) (Acidovorax avenae) protein is CRISPR-associated endoribonuclease Cas2.